A 182-amino-acid chain; its full sequence is MNYVPELKKYYKDSVIKELVKEFEYKSIMQVPKLEKIVISVGVGEAVRNKKLLDSAVLELAQITGQKAVKTKAKKAIAGFKIRQGQEIGAKVTLRGNAMYEFLYKLIHLALPRVKDFRGINGDAFDGNGNYSFGITEQIIFSEIDYDKIERISGLNITIVTTASNDKESKALLLKFGMPFSN.

Belongs to the universal ribosomal protein uL5 family. In terms of assembly, part of the 50S ribosomal subunit; part of the 5S rRNA/L5/L18/L25 subcomplex. Contacts the 5S rRNA and the P site tRNA. Forms a bridge to the 30S subunit in the 70S ribosome.

Functionally, this is one of the proteins that bind and probably mediate the attachment of the 5S RNA into the large ribosomal subunit, where it forms part of the central protuberance. In the 70S ribosome it contacts protein S13 of the 30S subunit (bridge B1b), connecting the 2 subunits; this bridge is implicated in subunit movement. Contacts the P site tRNA; the 5S rRNA and some of its associated proteins might help stabilize positioning of ribosome-bound tRNAs. In Borreliella burgdorferi (strain ATCC 35210 / DSM 4680 / CIP 102532 / B31) (Borrelia burgdorferi), this protein is Large ribosomal subunit protein uL5.